A 156-amino-acid polypeptide reads, in one-letter code: Endoribonuclease YbeY (156 aa).

Zn(2+) contacts are provided by His122, His126, and His132.

Belongs to the endoribonuclease YbeY family. Requires Zn(2+) as cofactor.

It is found in the cytoplasm. In terms of biological role, single strand-specific metallo-endoribonuclease involved in late-stage 70S ribosome quality control and in maturation of the 3' terminus of the 16S rRNA. In Symbiobacterium thermophilum (strain DSM 24528 / JCM 14929 / IAM 14863 / T), this protein is Endoribonuclease YbeY.